A 190-amino-acid chain; its full sequence is Heme-binding protein 1 (190 aa).

It belongs to the HEBP family. Monomer.

Its subcellular location is the cytoplasm. Its function is as follows. May bind free porphyrinogens that may be present in the cell and thus facilitate removal of these potentially toxic compound. Binds with a high affinity to one molecule of heme or porphyrins. It binds metalloporphyrins, free porphyrins and N-methylprotoporphyrin with similar affinities. The polypeptide is Heme-binding protein 1 (hebp1) (Xenopus laevis (African clawed frog)).